We begin with the raw amino-acid sequence, 424 residues long: CinA-like protein (424 aa).

Belongs to the CinA family.

This is CinA-like protein from Shewanella sediminis (strain HAW-EB3).